A 195-amino-acid polypeptide reads, in one-letter code: MGGTELDEMYFQSLSIAEVKLIRPRKFGDCRGYFSEVFREKWFRKNVADVGLVQDNESLSAQIGTVRGLHFQLEPFAQGKLVRCTRGALFDVAVDVRVGSPTYGKWVSAELSQENGAQLWVPAGFAHGFMTLKADTVISYKVTAPYSAEHDRGLKWDDPAIGINWPKMTTYVLSEKDSSQPSLCELPVSFQYVKV.

Residues R31, E36, 54–56 (QDN), and R67 contribute to the substrate site. H70 functions as the Proton acceptor in the catalytic mechanism. Substrate contacts are provided by K80 and H127. Y140 (proton donor) is an active-site residue. Substrate is bound by residues D151 and K176.

This sequence belongs to the dTDP-4-dehydrorhamnose 3,5-epimerase family. Homodimer.

The enzyme catalyses dTDP-4-dehydro-6-deoxy-alpha-D-glucose = dTDP-4-dehydro-beta-L-rhamnose. It participates in carbohydrate biosynthesis; dTDP-L-rhamnose biosynthesis. In terms of biological role, catalyzes the epimerization of the C3' and C5'positions of dTDP-6-deoxy-D-xylo-4-hexulose, forming dTDP-6-deoxy-L-lyxo-4-hexulose. In Sinorhizobium fredii (strain NBRC 101917 / NGR234), this protein is dTDP-4-dehydrorhamnose 3,5-epimerase.